Here is a 1019-residue protein sequence, read N- to C-terminus: Exportin-T (1019 aa).

This sequence belongs to the exportin family.

Its subcellular location is the nucleus. It localises to the cytoplasm. TRNA nucleus export receptor which facilitates tRNA translocation across the nuclear pore complex. Involved in pre-tRNA splicing, probably by affecting the interaction of pre-tRNA with splicing endonuclease. The sequence is that of Exportin-T (LOS1) from Chaetomium globosum (strain ATCC 6205 / CBS 148.51 / DSM 1962 / NBRC 6347 / NRRL 1970) (Soil fungus).